We begin with the raw amino-acid sequence, 269 residues long: Glutamate racemase (269 aa).

Substrate-binding positions include 11–12 and 43–44; these read DS and YG. Catalysis depends on cysteine 74, which acts as the Proton donor/acceptor. 75-76 provides a ligand contact to substrate; the sequence is NT. Cysteine 185 (proton donor/acceptor) is an active-site residue. 186-187 contributes to the substrate binding site; the sequence is TH.

Belongs to the aspartate/glutamate racemases family.

It catalyses the reaction L-glutamate = D-glutamate. Its pathway is cell wall biogenesis; peptidoglycan biosynthesis. Functionally, provides the (R)-glutamate required for cell wall biosynthesis. The protein is Glutamate racemase of Bacillus cereus (strain G9842).